We begin with the raw amino-acid sequence, 624 residues long: Ceramide transfer protein (624 aa).

The segment covering 1–11 has biased composition (polar residues); that stretch reads MSDNQSWNSSG. Residues 1 to 24 are disordered; it reads MSDNQSWNSSGSEEDPETESGPPV. The PH domain occupies 23 to 117; it reads PVERCGVLSK…WVDAIEQHKT (95 aa). Residues Ser126, Ser132, and Ser135 each carry the phosphoserine modification. Residues 202-221 form a disordered region; sequence DDEDDFPTTRSDGDFLHNTN. Residues 263–303 adopt a coiled-coil conformation; sequence IELMVKREESWQKRHDREVEKRRRVEEAYKNVMEELKKKPR. A Phosphoserine modification is found at Ser315. The FFAT signature appears at 321 to 327; sequence EFFDAVE. Tyr372 is subject to Phosphotyrosine. Phosphoserine occurs at positions 373, 377, and 380. Residues 389 to 618 form the START domain; the sequence is DVHRFSSQVE…FTSYVQEKTA (230 aa). An N-acylsphing-4-enine is bound by residues Glu472, Gln493, Asn530, and Tyr579.

Interacts with VAPA and VAPB. Interaction with VAPB is less efficient than with VAPA. Interacts (via FFAT motif) with MOSPD2 (via MSP domain). Phosphorylation on Ser-132 decreases the affinity toward phosphatidylinositol 4-phosphate at Golgi membranes and reduces ceramide transfer activity. Inactivated by hyperphosphorylation of serine residues by CSNK1G2/CK1 that triggers dissociation from the Golgi complex, thus down-regulating ER-to-Golgi transport of ceramide and sphingomyelin synthesis.

The protein resides in the cytoplasm. It is found in the golgi apparatus. Its subcellular location is the endoplasmic reticulum. The catalysed reaction is N-hexadecanoylsphing-4-enine(in) = N-hexadecanoylsphing-4-enine(out). Shelters ceramides and diacylglycerol lipids inside its START domain and mediates the intracellular trafficking of ceramides and diacylglycerol lipids in a non-vesicular manner. This Mus musculus (Mouse) protein is Ceramide transfer protein (Cert1).